A 295-amino-acid polypeptide reads, in one-letter code: Tyrosine recombinase XerC (295 aa).

Positions Met1 to Thr84 constitute a Core-binding (CB) domain. The Tyr recombinase domain occupies Lys105 to Arg289. Catalysis depends on residues Arg145, Lys169, His241, Arg244, and His267. Tyr276 acts as the O-(3'-phospho-DNA)-tyrosine intermediate in catalysis.

It belongs to the 'phage' integrase family. XerC subfamily. Forms a cyclic heterotetrameric complex composed of two molecules of XerC and two molecules of XerD.

The protein localises to the cytoplasm. In terms of biological role, site-specific tyrosine recombinase, which acts by catalyzing the cutting and rejoining of the recombining DNA molecules. The XerC-XerD complex is essential to convert dimers of the bacterial chromosome into monomers to permit their segregation at cell division. It also contributes to the segregational stability of plasmids. This is Tyrosine recombinase XerC from Lactobacillus delbrueckii subsp. bulgaricus (strain ATCC 11842 / DSM 20081 / BCRC 10696 / JCM 1002 / NBRC 13953 / NCIMB 11778 / NCTC 12712 / WDCM 00102 / Lb 14).